A 213-amino-acid chain; its full sequence is Ferric nitrobindin-like protein (213 aa).

A disordered region spans residues 17–42 (VNLAAEQSKSTSDKNLPEFGDMPIPD). The GXWXGXG motif lies at 65-71 (GVWRGQG).

This sequence belongs to the nitrobindin family.

This chain is Ferric nitrobindin-like protein, found in Corynebacterium jeikeium (strain K411).